The chain runs to 468 residues: Alpha-2A adrenergic receptor (468 aa).

The Extracellular portion of the chain corresponds to 1-48 (MFRQEQPLAEGSFAPMGSLQPDAGNASWNGTEAPGGGARATPYSLQVT). N-linked (GlcNAc...) asparagine glycosylation is found at Asn-25 and Asn-29. A helical membrane pass occupies residues 49-74 (LTLVCLAGLLMLFTVFGNVLVIIAVF). The Cytoplasmic segment spans residues 75-85 (TSRALKAPQNL). A helical transmembrane segment spans residues 86–111 (FLVSLASADILVATLVIPFSLANEVM). Residues 112-121 (GYWYFGKAWC) are Extracellular-facing. A disulfide bridge connects residues Cys-121 and Cys-203. The helical transmembrane segment at 122–144 (EIYLALDVLFCTSSIVHLCAISL) threads the bilayer. Residues 145–164 (DRYWSITQAIEYNLKRTPRR) lie on the Cytoplasmic side of the membrane. A helical membrane pass occupies residues 165–188 (IKAIIVTVWVISAVISFPPLISFE). The Extracellular portion of the chain corresponds to 189–207 (KKRGRSGQPSAEPRCEIND). A helical transmembrane segment spans residues 208-232 (QKWYVISSSIGSFFAPCLIMILVYV). At 233-392 (RIYQIAKRRT…RQNREKRFTF (160 aa)) the chain is on the cytoplasmic side. 2 disordered regions span residues 242 to 279 (TRVP…VGPV) and 291 to 381 (NGAP…SRWR). Basic and acidic residues predominate over residues 315 to 332 (SSEHAERPPGSRRSERGP). Ser-348 carries the phosphoserine modification. Over residues 351-366 (RRGPGATGLGAPTAGP) the composition is skewed to low complexity. The residue at position 370 (Arg-370) is an Omega-N-methylarginine. The helical transmembrane segment at 393–417 (VLAVVIGVFVVCWFPFFFTYTLTAI) threads the bilayer. Residues 418–427 (GCPVPPTLFK) lie on the Extracellular side of the membrane. The helical transmembrane segment at 428-448 (FFFWFGYCNSSLNPVIYTIFN) threads the bilayer. The Cytoplasmic portion of the chain corresponds to 449–468 (HDFRRAFKKILCRGDRKRIV). The S-palmitoyl cysteine moiety is linked to residue Cys-460.

Belongs to the G-protein coupled receptor 1 family. Adrenergic receptor subfamily. ADRA2A sub-subfamily. As to quaternary structure, component of the ADA2A-containing complex (ATAC), composed of KAT14, KAT2A, TADA2L, TADA3L, ZZ3, MBIP, WDR5, YEATS2, CCDC101 and DR1. Retina, brain and olfactory lobe.

The protein localises to the cell membrane. Functionally, alpha-2 adrenergic receptors mediate the catecholamine-induced inhibition of adenylate cyclase through the action of G proteins. Component of the ATAC complex, a complex with histone acetyltransferase activity on histones H3 and H4. The protein is Alpha-2A adrenergic receptor of Bos taurus (Bovine).